Here is a 377-residue protein sequence, read N- to C-terminus: Alanine racemase (377 aa).

Lys37 serves as the catalytic Proton acceptor; specific for D-alanine. At Lys37 the chain carries N6-(pyridoxal phosphate)lysine. Arg135 provides a ligand contact to substrate. The Proton acceptor; specific for L-alanine role is filled by Tyr271. Met319 is a binding site for substrate.

This sequence belongs to the alanine racemase family. The cofactor is pyridoxal 5'-phosphate.

It catalyses the reaction L-alanine = D-alanine. Its pathway is amino-acid biosynthesis; D-alanine biosynthesis; D-alanine from L-alanine: step 1/1. Catalyzes the interconversion of L-alanine and D-alanine. May also act on other amino acids. The chain is Alanine racemase (alr) from Helicobacter pylori (strain J99 / ATCC 700824) (Campylobacter pylori J99).